The chain runs to 265 residues: Glutamate racemase (265 aa).

Substrate-binding positions include aspartate 7–serine 8 and tyrosine 39–glycine 40. The Proton donor/acceptor role is filled by cysteine 71. Asparagine 72–threonine 73 lines the substrate pocket. Residue cysteine 184 is the Proton donor/acceptor of the active site. Position 185-186 (threonine 185–histidine 186) interacts with substrate.

It belongs to the aspartate/glutamate racemases family.

The enzyme catalyses L-glutamate = D-glutamate. It participates in cell wall biogenesis; peptidoglycan biosynthesis. In terms of biological role, provides the (R)-glutamate required for cell wall biosynthesis. This is Glutamate racemase from Sulfurovum sp. (strain NBC37-1).